Reading from the N-terminus, the 350-residue chain is Holliday junction branch migration complex subunit RuvB (350 aa).

Positions 4 to 184 are large ATPase domain (RuvB-L); the sequence is ADRIVTASSR…FGIVQRLEFY (181 aa). ATP is bound by residues Ile23, Arg24, Gly65, Lys68, Thr69, Thr70, 131–133, Arg174, Tyr184, and Arg221; that span reads EDF. Position 69 (Thr69) interacts with Mg(2+). Positions 185-255 are small ATPAse domain (RuvB-S); sequence STEDLATIVR…IADLALNMLD (71 aa). The tract at residues 258–350 is head domain (RuvB-H); that stretch reads ERGFDHQDRR…TPDLFEGDIV (93 aa). Residues Arg294, Arg313, and Arg318 each coordinate DNA.

This sequence belongs to the RuvB family. In terms of assembly, homohexamer. Forms an RuvA(8)-RuvB(12)-Holliday junction (HJ) complex. HJ DNA is sandwiched between 2 RuvA tetramers; dsDNA enters through RuvA and exits via RuvB. An RuvB hexamer assembles on each DNA strand where it exits the tetramer. Each RuvB hexamer is contacted by two RuvA subunits (via domain III) on 2 adjacent RuvB subunits; this complex drives branch migration. In the full resolvosome a probable DNA-RuvA(4)-RuvB(12)-RuvC(2) complex forms which resolves the HJ.

It is found in the cytoplasm. The catalysed reaction is ATP + H2O = ADP + phosphate + H(+). The RuvA-RuvB-RuvC complex processes Holliday junction (HJ) DNA during genetic recombination and DNA repair, while the RuvA-RuvB complex plays an important role in the rescue of blocked DNA replication forks via replication fork reversal (RFR). RuvA specifically binds to HJ cruciform DNA, conferring on it an open structure. The RuvB hexamer acts as an ATP-dependent pump, pulling dsDNA into and through the RuvAB complex. RuvB forms 2 homohexamers on either side of HJ DNA bound by 1 or 2 RuvA tetramers; 4 subunits per hexamer contact DNA at a time. Coordinated motions by a converter formed by DNA-disengaged RuvB subunits stimulates ATP hydrolysis and nucleotide exchange. Immobilization of the converter enables RuvB to convert the ATP-contained energy into a lever motion, pulling 2 nucleotides of DNA out of the RuvA tetramer per ATP hydrolyzed, thus driving DNA branch migration. The RuvB motors rotate together with the DNA substrate, which together with the progressing nucleotide cycle form the mechanistic basis for DNA recombination by continuous HJ branch migration. Branch migration allows RuvC to scan DNA until it finds its consensus sequence, where it cleaves and resolves cruciform DNA. This is Holliday junction branch migration complex subunit RuvB from Stutzerimonas stutzeri (strain A1501) (Pseudomonas stutzeri).